Here is a 679-residue protein sequence, read N- to C-terminus: Protein hook (679 aa).

A Calponin-homology (CH) domain is found at 6 to 123; the sequence is NEMYYSLLEW…RLLQLVLGCA (118 aa). 2 coiled-coil regions span residues 135–437 and 480–574; these read EIMC…LKCG and QTAL…QEIL.

It belongs to the hook family. As to quaternary structure, homodimer. Interacts with microtubules via its N-terminus.

Its subcellular location is the cytoplasm. The protein resides in the cytoskeleton. The protein localises to the endosome. It localises to the synapse. Involved in endocytic trafficking by stabilizing organelles of the endocytic pathway. Probably acts as a cytoskeletal linker protein required to tether endosome vesicles to the cytoskeleton. Involved in modulation of endocytosis at stages required for down-regulation of membrane proteins that control synapse size. Not involved in synaptic vesicle recycling. Required in R7 cells for boss endocytosis into multivesicular bodies (MVBs). Has a role in regulating adult longevity. This is Protein hook from Drosophila simulans (Fruit fly).